A 552-amino-acid chain; its full sequence is Urocanate hydratase (552 aa).

NAD(+) contacts are provided by residues 48–49 (GG), Q126, 172–174 (GMG), E192, R197, 238–239 (NA), 259–263 (QTSAH), 269–270 (YV), and Y318. C406 is an active-site residue. G488 lines the NAD(+) pocket.

This sequence belongs to the urocanase family. NAD(+) is required as a cofactor.

The protein localises to the cytoplasm. The enzyme catalyses 4-imidazolone-5-propanoate = trans-urocanate + H2O. It participates in amino-acid degradation; L-histidine degradation into L-glutamate; N-formimidoyl-L-glutamate from L-histidine: step 2/3. Its function is as follows. Catalyzes the conversion of urocanate to 4-imidazolone-5-propionate. This Herpetosiphon aurantiacus (strain ATCC 23779 / DSM 785 / 114-95) protein is Urocanate hydratase.